The primary structure comprises 171 residues: Translationally-controlled tumor protein homolog (171 aa).

The TCTP domain maps to 1 to 171 (MIIYKDIITG…FKDGLEIEKC (171 aa)).

The protein belongs to the TCTP family.

The protein localises to the cytoplasm. In terms of biological role, involved in calcium binding and microtubule stabilization. The sequence is that of Translationally-controlled tumor protein homolog (tpt1) from Labeo rohita (Indian major carp).